A 740-amino-acid chain; its full sequence is Ion-translocating oxidoreductase complex subunit C (740 aa).

4Fe-4S ferredoxin-type domains are found at residues 369-397 (GEPQ…QQLY) and 407-436 (KATT…VQYF). Residues Cys-377, Cys-380, Cys-383, Cys-387, Cys-416, Cys-419, Cys-422, and Cys-426 each coordinate [4Fe-4S] cluster. 2 disordered regions span residues 602 to 621 (KLEQ…PRKA) and 660 to 718 (ARAK…RKAA). Over residues 611-621 (KPEEQVDPRKA) the composition is skewed to basic and acidic residues.

The protein belongs to the 4Fe4S bacterial-type ferredoxin family. RnfC subfamily. In terms of assembly, the complex is composed of six subunits: RsxA, RsxB, RsxC, RsxD, RsxE and RsxG. The cofactor is [4Fe-4S] cluster.

It localises to the cell inner membrane. Functionally, part of a membrane-bound complex that couples electron transfer with translocation of ions across the membrane. Required to maintain the reduced state of SoxR. The sequence is that of Ion-translocating oxidoreductase complex subunit C from Escherichia coli O9:H4 (strain HS).